Reading from the N-terminus, the 598-residue chain is Elongation factor 4 (598 aa).

The 178-residue stretch at Lys-4–Gln-181 folds into the tr-type G domain. Residues Asp-16–Thr-21 and Asn-128–Asp-131 each bind GTP.

The protein belongs to the TRAFAC class translation factor GTPase superfamily. Classic translation factor GTPase family. LepA subfamily.

It is found in the cell membrane. It catalyses the reaction GTP + H2O = GDP + phosphate + H(+). Its function is as follows. Required for accurate and efficient protein synthesis under certain stress conditions. May act as a fidelity factor of the translation reaction, by catalyzing a one-codon backward translocation of tRNAs on improperly translocated ribosomes. Back-translocation proceeds from a post-translocation (POST) complex to a pre-translocation (PRE) complex, thus giving elongation factor G a second chance to translocate the tRNAs correctly. Binds to ribosomes in a GTP-dependent manner. This chain is Elongation factor 4, found in Mesomycoplasma hyopneumoniae (strain 232) (Mycoplasma hyopneumoniae).